A 291-amino-acid chain; its full sequence is Protease HtpX homolog (291 aa).

2 helical membrane passes run 11–31 (INTF…GLLA) and 34–54 (FLGM…ACVQ). His-140 is a Zn(2+) binding site. Residue Glu-141 is part of the active site. Position 144 (His-144) interacts with Zn(2+). Helical transmembrane passes span 155–175 (IVFG…RALI) and 186–206 (AFSF…AMLV). Glu-215 is a Zn(2+) binding site.

This sequence belongs to the peptidase M48B family. The cofactor is Zn(2+).

Its subcellular location is the cell membrane. This is Protease HtpX homolog from Tropheryma whipplei (strain TW08/27) (Whipple's bacillus).